Consider the following 883-residue polypeptide: Putative pentatricopeptide repeat-containing protein At1g13800 (883 aa).

PPR repeat units follow at residues 145–180, 181–215, 216–251, 253–285, 290–324, 325–359, 360–394, 395–429, 430–464, 465–499, 500–534, 537–561, 563–598, 599–633, 634–668, 697–731, 760–794, 795–829, and 830–864; these read LIRV…GRAP, DIKA…GLDA, DAHT…TRNP, VFYL…NILV, LGIA…GIDP, DVYV…RKRI, NCVI…NISL, DRVC…GIAP, DVIN…GKTP, DIVI…GVKP, TYVT…SREN, SMVK…LEFP, PKSV…GVEP, EKSM…KIVP, DLFT…DVKP, DVVY…EIVP, DVFY…GVDP, DAAP…GVKP, and DVVP…GIKP.

This sequence belongs to the PPR family. P subfamily.

This is Putative pentatricopeptide repeat-containing protein At1g13800 from Arabidopsis thaliana (Mouse-ear cress).